The following is a 378-amino-acid chain: UPF0754 membrane protein Bcer98_0694 (378 aa).

The chain crosses the membrane as a helical span at residues 358 to 378 (LGALLGGTIGLMQGILLLFLM).

It belongs to the UPF0754 family.

The protein localises to the cell membrane. The chain is UPF0754 membrane protein Bcer98_0694 from Bacillus cytotoxicus (strain DSM 22905 / CIP 110041 / 391-98 / NVH 391-98).